Reading from the N-terminus, the 184-residue chain is ADP-ribosylation factor-like protein 2 (184 aa).

Residue Gly2 is the site of N-myristoyl glycine attachment. Residues 23–30 (GLDNAGKT), 66–70 (DVGGQ), Gly68, and 125–128 (NKSD) each bind GTP.

The protein belongs to the small GTPase superfamily. Arf family. In terms of tissue distribution, in the embryo, strongly expressed in migrating hypodermal cells. Shortly before the beginning of elongation, expressed in many developing neurons where it persists throughout adulthood. In the larva, highly expressed in migrating hypodermal cells and the uterus. Also expressed in vulva, spermatheca, sheath cells, distal tips cells and proctoderm of the male tail.

Its subcellular location is the cytoplasm. It is found in the cell membrane. It localises to the cytoskeleton. The protein resides in the microtubule organizing center. The protein localises to the centrosome. In terms of biological role, GTP-binding protein that functions in embryogenesis, cytokinesis, germline development and microtubulule cytoskeleton dynamics. The polypeptide is ADP-ribosylation factor-like protein 2 (evl-20) (Caenorhabditis elegans).